We begin with the raw amino-acid sequence, 216 residues long: Octanoyltransferase (216 aa).

In terms of domain architecture, BPL/LPL catalytic spans 32-207; it reads SDSQDELWIV…TFSQIMGYQQ (176 aa). Residues 71 to 78, 138 to 140, and 151 to 153 each bind substrate; these read RGGQVTYH, SLG, and GLA. Cys169 (acyl-thioester intermediate) is an active-site residue.

It belongs to the LipB family.

Its subcellular location is the cytoplasm. It catalyses the reaction octanoyl-[ACP] + L-lysyl-[protein] = N(6)-octanoyl-L-lysyl-[protein] + holo-[ACP] + H(+). Its pathway is protein modification; protein lipoylation via endogenous pathway; protein N(6)-(lipoyl)lysine from octanoyl-[acyl-carrier-protein]: step 1/2. Its function is as follows. Catalyzes the transfer of endogenously produced octanoic acid from octanoyl-acyl-carrier-protein onto the lipoyl domains of lipoate-dependent enzymes. Lipoyl-ACP can also act as a substrate although octanoyl-ACP is likely to be the physiological substrate. The polypeptide is Octanoyltransferase (Shewanella frigidimarina (strain NCIMB 400)).